Here is a 455-residue protein sequence, read N- to C-terminus: Dihydrolipoyllysine-residue succinyltransferase component of 2-oxoglutarate dehydrogenase complex, mitochondrial (455 aa).

Residues 1–68 (MLSRSRCVSR…RFFRTTAVCK (68 aa)) constitute a mitochondrion transit peptide. In terms of domain architecture, Lipoyl-binding spans 71–145 (VITVKTPAFA…EGGTPLFTLR (75 aa)). S82 is modified (phosphoserine). The residue at position 111 (K111) is an N6-lipoyllysine. The segment covering 153–173 (KAKPAEAPAAAAPKAEPAVSA) has biased composition (low complexity). Residues 153 to 214 (KAKPAEAPAA…KPTAAPPVAE (62 aa)) form a disordered region. K155 bears the N6-acetyllysine mark. Positions 174–195 (VPPPPAASIPTQMPPVPSPPQP) are enriched in pro residues. Residues 221-453 (LRAEHREKMN…AVEDPRVLLL (233 aa)) form a catalytic region. N6-acetyllysine occurs at positions 269, 274, 275, 279, and 309. Active-site residues include H426 and D430.

It belongs to the 2-oxoacid dehydrogenase family. In terms of assembly, the 2-oxoglutarate dehydrogenase complex is composed of OGDH (2-oxoglutarate dehydrogenase; E1), DLST (dihydrolipoamide succinyltransferase; E2), DLD (dihydrolipoamide dehydrogenase; E3) and the assembly factor KGD4. It contains multiple copies of the three enzymatic components (E1, E2 and E3). In the nucleus, the 2-oxoglutarate dehydrogenase complex associates with KAT2A. Interacts with ABHD11; this interaction maintains the functional lipoylation of the 2-oxoglutarate dehydrogenase complex. The cofactor is (R)-lipoate.

It is found in the mitochondrion matrix. Its subcellular location is the nucleus. It carries out the reaction N(6)-[(R)-dihydrolipoyl]-L-lysyl-[protein] + succinyl-CoA = N(6)-[(R)-S(8)-succinyldihydrolipoyl]-L-lysyl-[protein] + CoA. The protein operates within amino-acid degradation; L-lysine degradation via saccharopine pathway; glutaryl-CoA from L-lysine: step 6/6. It participates in carbohydrate metabolism; tricarboxylic acid cycle. Its function is as follows. Dihydrolipoamide succinyltransferase (E2) component of the 2-oxoglutarate dehydrogenase complex. The 2-oxoglutarate dehydrogenase complex catalyzes the overall conversion of 2-oxoglutarate to succinyl-CoA and CO(2). The 2-oxoglutarate dehydrogenase complex is mainly active in the mitochondrion. A fraction of the 2-oxoglutarate dehydrogenase complex also localizes in the nucleus and is required for lysine succinylation of histones: associates with KAT2A on chromatin and provides succinyl-CoA to histone succinyltransferase KAT2A. The polypeptide is Dihydrolipoyllysine-residue succinyltransferase component of 2-oxoglutarate dehydrogenase complex, mitochondrial (Sus scrofa (Pig)).